Reading from the N-terminus, the 134-residue chain is Cytochrome b (134 aa).

The next 3 membrane-spanning stretches (helical) occupy residues 33–53, 77–98, and 113–133; these read FGSL…FLAM, WLIR…FLHV, and WNMG…GYVL. Heme b is bound by residues His83 and His97.

Belongs to the cytochrome b family. In terms of assembly, the cytochrome bc1 complex contains 11 subunits: 3 respiratory subunits (MT-CYB, CYC1 and UQCRFS1), 2 core proteins (UQCRC1 and UQCRC2) and 6 low-molecular weight proteins (UQCRH/QCR6, UQCRB/QCR7, UQCRQ/QCR8, UQCR10/QCR9, UQCR11/QCR10 and a cleavage product of UQCRFS1). This cytochrome bc1 complex then forms a dimer. Requires heme b as cofactor.

The protein resides in the mitochondrion inner membrane. Its function is as follows. Component of the ubiquinol-cytochrome c reductase complex (complex III or cytochrome b-c1 complex) that is part of the mitochondrial respiratory chain. The b-c1 complex mediates electron transfer from ubiquinol to cytochrome c. Contributes to the generation of a proton gradient across the mitochondrial membrane that is then used for ATP synthesis. The protein is Cytochrome b (MT-CYB) of Microtus subterraneus (European pine vole).